The primary structure comprises 337 residues: uncharacterized protein (337 aa).

Positions 22 to 76 (PFRLLSLPTLALKNVLLHIDFIDLLELSLASKKCEIYMKTCCLKIDSLHFHFRRI) constitute an F-box domain.

This is an uncharacterized protein from Caenorhabditis elegans.